We begin with the raw amino-acid sequence, 358 residues long: 3-dehydroquinate synthase (358 aa).

NAD(+) contacts are provided by residues 70-75 (DGEQYK), 104-108 (GVVGD), 128-129 (TT), Lys141, Lys150, and 168-171 (CLNT). The Zn(2+) site is built by Glu183, His246, and His263.

It belongs to the sugar phosphate cyclases superfamily. Dehydroquinate synthase family. Requires Co(2+) as cofactor. It depends on Zn(2+) as a cofactor. The cofactor is NAD(+).

The protein localises to the cytoplasm. The catalysed reaction is 7-phospho-2-dehydro-3-deoxy-D-arabino-heptonate = 3-dehydroquinate + phosphate. It functions in the pathway metabolic intermediate biosynthesis; chorismate biosynthesis; chorismate from D-erythrose 4-phosphate and phosphoenolpyruvate: step 2/7. Its function is as follows. Catalyzes the conversion of 3-deoxy-D-arabino-heptulosonate 7-phosphate (DAHP) to dehydroquinate (DHQ). In Shewanella sediminis (strain HAW-EB3), this protein is 3-dehydroquinate synthase.